Consider the following 559-residue polypeptide: Polypeptide N-acetylgalactosaminyltransferase 1 (559 aa).

Residues 1-8 lie on the Cytoplasmic side of the membrane; that stretch reads MRKFAYCK. Residues 9–28 traverse the membrane as a helical; Signal-anchor for type II membrane protein segment; that stretch reads VVLATSLIWVLLDMFLLLYF. Topologically, residues 29–559 are lumenal; that stretch reads SECNKCDEKK…LRNVTLPEIF (531 aa). Residues 45–66 are disordered; the sequence is GDVLEPVQKPHEGPGEMGKPVV. N-linked (GlcNAc...) asparagine glycosylation occurs at Asn-95. Cystine bridges form between Cys-106–Cys-339, Cys-330–Cys-408, Cys-442–Cys-459, Cys-482–Cys-497, and Cys-523–Cys-540. The catalytic subdomain A stretch occupies residues 115-225; that stretch reads LPTTSVVIVF…VGWLEPLLAR (111 aa). 2 residues coordinate substrate: Asp-156 and Arg-186. Mn(2+)-binding residues include Asp-209 and His-211. Residues 285-347 form a catalytic subdomain B region; sequence PVRTPTMAGG…TCSHVGHVFR (63 aa). Position 316 (Trp-316) interacts with substrate. His-344 is a Mn(2+) binding site. Residues Arg-347 and Tyr-352 each contribute to the substrate site. Residues 429-551 form the Ricin B-type lectin domain; the sequence is SSLGEIRNVE…GSRSQQWLLR (123 aa). Asn-552 carries N-linked (GlcNAc...) asparagine glycosylation.

The protein belongs to the glycosyltransferase 2 family. GalNAc-T subfamily. Mn(2+) is required as a cofactor.

It localises to the golgi apparatus. It is found in the golgi stack membrane. Its subcellular location is the secreted. It carries out the reaction L-seryl-[protein] + UDP-N-acetyl-alpha-D-galactosamine = a 3-O-[N-acetyl-alpha-D-galactosaminyl]-L-seryl-[protein] + UDP + H(+). The catalysed reaction is L-threonyl-[protein] + UDP-N-acetyl-alpha-D-galactosamine = a 3-O-[N-acetyl-alpha-D-galactosaminyl]-L-threonyl-[protein] + UDP + H(+). It participates in protein modification; protein glycosylation. Functionally, catalyzes the initial reaction in O-linked oligosaccharide biosynthesis, the transfer of an N-acetyl-D-galactosamine residue to a serine or threonine residue on the protein receptor. Has a broad spectrum of substrates such as apomucin-, MUC5AC-, MUC1- and MUC2-derived peptides. In Sus scrofa (Pig), this protein is Polypeptide N-acetylgalactosaminyltransferase 1.